Reading from the N-terminus, the 301-residue chain is MNKIRCALIGPGNIGTDLLYKLRRSDILEPVWMVGVEPTSEGLARARELGLKTTSDGIDGLLPHLEADDIRIAFDATSAYVHAEHSAKLTARGVRVIDLTPAAIGPFCVPPVNLAAHIGSNEMNVNMVTCGGQATIPMVYAVSRVQPVAYGEIVATVSSRSVGPGTRRNIDEFTRTTAGAIEAVGGARQGKAIIVINPAEPPLIMRDTIHCLTEDAPDVAAITASVHDMIAEVRKYVPGYTLKNGPVFDGKRVSIFLEVEGLGDYLPKYAGNLDIMTASAARTAECIAAAMRAGSPETATA.

Residue Cys-130 is the Acyl-thioester intermediate of the active site. Residues 161–169 and Asn-272 each bind NAD(+); that span reads SVGPGTRRN.

The protein belongs to the acetaldehyde dehydrogenase family.

It catalyses the reaction acetaldehyde + NAD(+) + CoA = acetyl-CoA + NADH + H(+). In Cupriavidus taiwanensis (strain DSM 17343 / BCRC 17206 / CCUG 44338 / CIP 107171 / LMG 19424 / R1) (Ralstonia taiwanensis (strain LMG 19424)), this protein is Acetaldehyde dehydrogenase (mhpF).